Consider the following 175-residue polypeptide: ATP synthase subunit b (175 aa).

A helical membrane pass occupies residues L13–L33.

Belongs to the ATPase B chain family. In terms of assembly, F-type ATPases have 2 components, F(1) - the catalytic core - and F(0) - the membrane proton channel. F(1) has five subunits: alpha(3), beta(3), gamma(1), delta(1), epsilon(1). F(0) has four main subunits: a(1), b(2) and c(10-14). The alpha and beta chains form an alternating ring which encloses part of the gamma chain. F(1) is attached to F(0) by a central stalk formed by the gamma and epsilon chains, while a peripheral stalk is formed by the delta and b chains.

The protein localises to the cell inner membrane. Its function is as follows. F(1)F(0) ATP synthase produces ATP from ADP in the presence of a proton or sodium gradient. F-type ATPases consist of two structural domains, F(1) containing the extramembraneous catalytic core and F(0) containing the membrane proton channel, linked together by a central stalk and a peripheral stalk. During catalysis, ATP synthesis in the catalytic domain of F(1) is coupled via a rotary mechanism of the central stalk subunits to proton translocation. Component of the F(0) channel, it forms part of the peripheral stalk, linking F(1) to F(0). The protein is ATP synthase subunit b of Chloroherpeton thalassium (strain ATCC 35110 / GB-78).